We begin with the raw amino-acid sequence, 433 residues long: Signal recognition particle 54 kDa protein (433 aa).

GTP-binding positions include 106-113, 186-190, and 244-247; these read GVEGSGKT, DTAGR, and TKMD.

It belongs to the GTP-binding SRP family. SRP54 subfamily. As to quaternary structure, part of the signal recognition particle protein translocation system, which is composed of SRP and FtsY. Archaeal SRP consists of a 7S RNA molecule of 300 nucleotides and two protein subunits: SRP54 and SRP19.

It localises to the cytoplasm. It catalyses the reaction GTP + H2O = GDP + phosphate + H(+). Functionally, involved in targeting and insertion of nascent membrane proteins into the cytoplasmic membrane. Binds to the hydrophobic signal sequence of the ribosome-nascent chain (RNC) as it emerges from the ribosomes. The SRP-RNC complex is then targeted to the cytoplasmic membrane where it interacts with the SRP receptor FtsY. The chain is Signal recognition particle 54 kDa protein from Pyrobaculum islandicum (strain DSM 4184 / JCM 9189 / GEO3).